A 282-amino-acid chain; its full sequence is Endochitinase 4 (282 aa).

One can recognise a GH18 domain in the interval 1 to 282 (GAKNGVHPPL…TWSINWDGSK (282 aa)). Catalysis depends on E112, which acts as the Proton donor. N-linked (GlcNAc...) asparagine glycosylation occurs at N265.

It belongs to the glycosyl hydrolase 18 family. Chitinase class V subfamily.

The protein resides in the secreted. It catalyses the reaction Random endo-hydrolysis of N-acetyl-beta-D-glucosaminide (1-&gt;4)-beta-linkages in chitin and chitodextrins.. In terms of biological role, secreted chitinase involved in the degradation of chitin, a component of the cell walls of fungi and exoskeletal elements of some animals (including worms and arthropods). Participates in the infection process and directly acts in the penetration process of the host cuticle. This chain is Endochitinase 4 (chi4), found in Metarhizium anisopliae (Entomophthora anisopliae).